A 624-amino-acid polypeptide reads, in one-letter code: Kelch-like ECH-associated protein 1 (624 aa).

C38 carries the S-(2-succinyl)cysteine modification. The BTB domain occupies 77–149 (CDVTLQVKYQ…AYTASISMGE (73 aa)). R135 is covalently cross-linked (N5-[4-(S-L-cysteinyl)-5-methyl-1H-imidazol-2-yl]-L-ornithine (Arg-Cys) (interchain with C-151 in KEAP1)). The residue at position 151 (C151) is an S-(2,3-dicarboxypropyl)cysteine; alternate. The residue at position 151 (C151) is an S-(2-succinyl)cysteine; alternate. C151 carries the S-nitrosocysteine; alternate modification. C151 participates in a covalent cross-link: N5-[4-(S-L-cysteinyl)-5-methyl-1H-imidazol-2-yl]-L-ornithine (Cys-Arg) (interchain with R-135 in KEAP1). In terms of domain architecture, BACK spans 184 to 286 (AIGIANFAEQ…TPNFLQMQLQ (103 aa)). C241 is subject to S-(2-succinyl)cysteine. S-(2,3-dicarboxypropyl)cysteine occurs at positions 257 and 273. The residue at position 288 (C288) is an S-(2,3-dicarboxypropyl)cysteine; alternate. C288 carries the post-translational modification S-(2-succinyl)cysteine; alternate. C319 is subject to S-(2-succinyl)cysteine. 6 Kelch repeats span residues 327–372 (LIYT…VVGG), 373–423 (LLYA…VIDG), 424–470 (HIYA…VLNR), 471–517 (LLYA…VLHN), 518–564 (CIYA…VHQG), and 565–611 (RIYV…VTME). C434 is subject to S-cGMP-cysteine. Position 613 is an S-(2-succinyl)cysteine (C613).

Belongs to the KEAP1 family. As to quaternary structure, component of the BCR(KEAP1) E3 ubiquitin ligase complex, at least composed of 2 molecules of CUL3, 2 molecules of KEAP1, and RBX1. Interacts with NFE2L2/NRF2; the interaction is direct. Forms a ternary complex with NFE2L2/NRF2 and PGAM5. Interacts with (phosphorylated) SQSTM1/p62; the interaction is direct and inactivates the BCR(KEAP1) complex by sequestering it in inclusion bodies, promoting its degradation. Interacts with NFE2L1. Interacts with BPTF and PTMA. Interacts with MAP1LC3B. Interacts indirectly with ENC1. Interacts with SESN1 and SESN2. Interacts with HSP90AA1 and HSP90AB1. Interacts with PGCKA1; this interaction prevents the ubiquitination of KEAP1 by TRIM25, thus protecting KEAP1 from degradation. (Microbial infection) Interacts with ebolavirus protein VP24; this interaction activates transcription factor NFE2L2/NRF2 by blocking its interaction with KEAP1. Non-enzymatic covalent modifications of reactive cysteines by electrophile metabolites inactivate the BCR(KEAP1) complex. Accumulation of fumarate promotes the formation of cysteine S-succination (S-(2-succinyl)cysteine), leading to inactivate the BCR(KEAP1) complex and promote NFE2L2/NRF2 nuclear accumulation and activation. Nitric oxide-dependent 8-Nitro-cGMP formation promotes cysteine guanylation (S-cGMP-cysteine), leading to NFE2L2/NRF2 nuclear accumulation and activation. Itaconate, an anti-inflammatory metabolite generated in response to lipopolysaccharide, alkylates cysteines, activating NFE2L2/NRF2. Methylglyoxal, a reactive metabolite that accumulates when the glycolytic enzyme PGK1 is inhibited, promotes formation of a methylimidazole cross-link between proximal Cys-151 and Arg-135 on another KEAP1 molecule, resulting in an inactive dimer that inactivates the BCR(KEAP1) complex. Post-translationally, degraded via a proteasomal-independent process during selective autophagy: interaction with phosphorylated SQSTM1/p62 sequesters KEAP1 in inclusion bodies, leading to its degradation. In terms of processing, auto-ubiquitinated by the BCR(KEAP1) complex. Quinone-induced oxidative stress, but not sulforaphane, increases its ubiquitination. Ubiquitination and subsequent degradation is most pronounced following prolonged exposure of cells to oxidative stress, particularly in glutathione-deficient cells that are highly susceptible to oxidative stress. Deubiquitinated by USP25; leading to stabilization. Ubiquitinated by TRIM25; leading to degradation upon ER stress. In terms of tissue distribution, broadly expressed, with highest levels in skeletal muscle.

Its subcellular location is the cytoplasm. It localises to the nucleus. The protein operates within protein modification; protein ubiquitination. Ubiquitin ligase activity of the BCR(KEAP1) complex is inhibited by oxidative stress and electrophile metabolites such as sulforaphane. Electrophile metabolites react with reactive cysteine residues in KEAP1 and trigger non-enzymatic covalent modifications of these cysteine residues, leading to inactivate the ubiquitin ligase activity of the BCR(KEAP1) complex. Selective autophagy also inactivates the BCR(KEAP1) complex via interaction between KEAP1 and SQSTM1/p62, which sequesters the complex in inclusion bodies and promotes its degradation. Substrate-specific adapter of a BCR (BTB-CUL3-RBX1) E3 ubiquitin ligase complex that regulates the response to oxidative stress by targeting NFE2L2/NRF2 for ubiquitination. KEAP1 acts as a key sensor of oxidative and electrophilic stress: in normal conditions, the BCR(KEAP1) complex mediates ubiquitination and degradation of NFE2L2/NRF2, a transcription factor regulating expression of many cytoprotective genes. In response to oxidative stress, different electrophile metabolites trigger non-enzymatic covalent modifications of highly reactive cysteine residues in KEAP1, leading to inactivate the ubiquitin ligase activity of the BCR(KEAP1) complex, promoting NFE2L2/NRF2 nuclear accumulation and expression of phase II detoxifying enzymes. In response to selective autophagy, KEAP1 is sequestered in inclusion bodies following its interaction with SQSTM1/p62, leading to inactivation of the BCR(KEAP1) complex and activation of NFE2L2/NRF2. The BCR(KEAP1) complex also mediates ubiquitination of SQSTM1/p62, increasing SQSTM1/p62 sequestering activity and degradation. The BCR(KEAP1) complex also targets BPTF and PGAM5 for ubiquitination and degradation by the proteasome. This is Kelch-like ECH-associated protein 1 from Homo sapiens (Human).